The primary structure comprises 399 residues: 4-hydroxy-3-methylbut-2-enyl diphosphate reductase (399 aa).

Position 66 (Cys66) interacts with [4Fe-4S] cluster. His96 contributes to the (2E)-4-hydroxy-3-methylbut-2-enyl diphosphate binding site. Position 96 (His96) interacts with dimethylallyl diphosphate. An isopentenyl diphosphate-binding site is contributed by His96. Residue Cys157 coordinates [4Fe-4S] cluster. His185 is a binding site for (2E)-4-hydroxy-3-methylbut-2-enyl diphosphate. A dimethylallyl diphosphate-binding site is contributed by His185. His185 is an isopentenyl diphosphate binding site. The Proton donor role is filled by Glu187. Thr250 is a (2E)-4-hydroxy-3-methylbut-2-enyl diphosphate binding site. Cys288 lines the [4Fe-4S] cluster pocket. (2E)-4-hydroxy-3-methylbut-2-enyl diphosphate is bound by residues Ser317, Ser318, Asn319, and Ser380. 4 residues coordinate dimethylallyl diphosphate: Ser317, Ser318, Asn319, and Ser380. Isopentenyl diphosphate-binding residues include Ser317, Ser318, Asn319, and Ser380.

It belongs to the IspH family. The cofactor is [4Fe-4S] cluster.

The catalysed reaction is isopentenyl diphosphate + 2 oxidized [2Fe-2S]-[ferredoxin] + H2O = (2E)-4-hydroxy-3-methylbut-2-enyl diphosphate + 2 reduced [2Fe-2S]-[ferredoxin] + 2 H(+). The enzyme catalyses dimethylallyl diphosphate + 2 oxidized [2Fe-2S]-[ferredoxin] + H2O = (2E)-4-hydroxy-3-methylbut-2-enyl diphosphate + 2 reduced [2Fe-2S]-[ferredoxin] + 2 H(+). Its pathway is isoprenoid biosynthesis; dimethylallyl diphosphate biosynthesis; dimethylallyl diphosphate from (2E)-4-hydroxy-3-methylbutenyl diphosphate: step 1/1. The protein operates within isoprenoid biosynthesis; isopentenyl diphosphate biosynthesis via DXP pathway; isopentenyl diphosphate from 1-deoxy-D-xylulose 5-phosphate: step 6/6. Its function is as follows. Catalyzes the conversion of 1-hydroxy-2-methyl-2-(E)-butenyl 4-diphosphate (HMBPP) into a mixture of isopentenyl diphosphate (IPP) and dimethylallyl diphosphate (DMAPP). Acts in the terminal step of the DOXP/MEP pathway for isoprenoid precursor biosynthesis. The protein is 4-hydroxy-3-methylbut-2-enyl diphosphate reductase of Synechococcus sp. (strain CC9902).